The chain runs to 430 residues: Levansucrase Lscgamma (430 aa).

The sucrose site is built by tryptophan 60, aspartate 61, alanine 147, arginine 217, and aspartate 218. Aspartate 61 (nucleophile) is an active-site residue. Glutamate 302 functions as the Proton donor/acceptor in the catalytic mechanism.

It belongs to the glycosyl hydrolase 68 family. Homodimer.

It carries out the reaction [6)-beta-D-fructofuranosyl-(2-&gt;](n) alpha-D-glucopyranoside + sucrose = [6)-beta-D-fructofuranosyl-(2-&gt;](n+1) alpha-D-glucopyranoside + D-glucose. Sucrose hydrolase activity is negatively affected by salt concentration. The levan polymerization rate increases sharply in relation to sucrose concentration reaching the maximum at 100 mM sucrose, and then steadily decreases, suggesting a strong inhibition of the activity by the substrate. In terms of biological role, catalyzes the synthesis of levan, a fructose polymer, by transferring the fructosyl moiety from sucrose to a growing acceptor molecule. Also displays sucrose hydrolase activity. Can depolymerize the levan produced once substrate is completely exhausted. The polypeptide is Levansucrase Lscgamma (Pseudomonas syringae pv. actinidiae).